We begin with the raw amino-acid sequence, 216 residues long: Transmembrane emp24 domain-containing protein eca (216 aa).

A signal peptide spans 1–20 (MRDQWICLALVLCALHSACG). The Lumenal segment spans residues 21 to 183 (LYFHISETER…RHTSESTNSR (163 aa)). A GOLD domain is found at 30-126 (RKCFIEEVPD…QLRVHLDIQV (97 aa)). Residues 134–164 (ANVAQKEKLTELQLRIRQLLDQVEQITKEQN) adopt a coiled-coil conformation. The helical transmembrane segment at 184-203 (VLWWSLAQTVVLVCMGFWQM) threads the bilayer. Over 204 to 216 (RHLKSFFEAKKLV) the chain is Cytoplasmic. The Prevents secretion from ER signature appears at 213 to 216 (KKLV).

It belongs to the EMP24/GP25L family.

Its subcellular location is the endoplasmic reticulum membrane. Functionally, eca and bai are essential, though not redundant, for dorsoventral patterning of the embryo. Specifically required during early embryogenesis for the activity of maternal tkv, while the zygotic tkv is not affected. The chain is Transmembrane emp24 domain-containing protein eca from Drosophila mojavensis (Fruit fly).